A 512-amino-acid polypeptide reads, in one-letter code: Lysine--tRNA ligase (512 aa).

2 residues coordinate Mg(2+): Glu-422 and Glu-429.

Belongs to the class-II aminoacyl-tRNA synthetase family. As to quaternary structure, homodimer. The cofactor is Mg(2+).

It is found in the cytoplasm. The enzyme catalyses tRNA(Lys) + L-lysine + ATP = L-lysyl-tRNA(Lys) + AMP + diphosphate. The chain is Lysine--tRNA ligase from Paraburkholderia phymatum (strain DSM 17167 / CIP 108236 / LMG 21445 / STM815) (Burkholderia phymatum).